A 123-amino-acid chain; its full sequence is MTYQRLSLGRWGEDIAAGYLRRQGMKILDRNIRTPVGELDIVARHKRMLIFVEVKTRRGISHGYPQEAVGAAKQRQILRAAQWYLAERRLDRLQPRFDVIAVRRRGDEAEVEHFPGAFDVDGW.

Belongs to the UPF0102 family.

This Syntrophotalea carbinolica (strain DSM 2380 / NBRC 103641 / GraBd1) (Pelobacter carbinolicus) protein is UPF0102 protein Pcar_2217.